A 239-amino-acid chain; its full sequence is Pyridoxine 5'-phosphate synthase (239 aa).

Asn-7 is a 3-amino-2-oxopropyl phosphate binding site. 9 to 10 (DH) is a 1-deoxy-D-xylulose 5-phosphate binding site. Arg-18 provides a ligand contact to 3-amino-2-oxopropyl phosphate. The Proton acceptor role is filled by His-43. Arg-45 and His-50 together coordinate 1-deoxy-D-xylulose 5-phosphate. Glu-70 (proton acceptor) is an active-site residue. 1-deoxy-D-xylulose 5-phosphate is bound at residue Thr-100. The active-site Proton donor is His-191. 3-amino-2-oxopropyl phosphate-binding positions include Gly-192 and 213–214 (GH).

The protein belongs to the PNP synthase family. In terms of assembly, homooctamer; tetramer of dimers.

The protein localises to the cytoplasm. It catalyses the reaction 3-amino-2-oxopropyl phosphate + 1-deoxy-D-xylulose 5-phosphate = pyridoxine 5'-phosphate + phosphate + 2 H2O + H(+). The protein operates within cofactor biosynthesis; pyridoxine 5'-phosphate biosynthesis; pyridoxine 5'-phosphate from D-erythrose 4-phosphate: step 5/5. Functionally, catalyzes the complicated ring closure reaction between the two acyclic compounds 1-deoxy-D-xylulose-5-phosphate (DXP) and 3-amino-2-oxopropyl phosphate (1-amino-acetone-3-phosphate or AAP) to form pyridoxine 5'-phosphate (PNP) and inorganic phosphate. This is Pyridoxine 5'-phosphate synthase from Citrifermentans bemidjiense (strain ATCC BAA-1014 / DSM 16622 / JCM 12645 / Bem) (Geobacter bemidjiensis).